The sequence spans 1481 residues: Cystic fibrosis transmembrane conductance regulator (1481 aa).

The Cytoplasmic portion of the chain corresponds to 1 to 77; the sequence is MQKSPLVKAS…KLINALRRCF (77 aa). The helical transmembrane segment at 78–98 threads the bilayer; the sequence is LWRFIFYGILLYLGEVTKAVQ. Positions 81-365 constitute an ABC transmembrane type-1 1 domain; sequence FIFYGILLYL…GAVQTWYDSL (285 aa). At 99–122 the chain is on the extracellular side; sequence PLLLGRIIASYDPDNKEERSIAIY. The helical transmembrane segment at 123 to 146 threads the bilayer; it reads LAIGLCLLFIVRTLLLHPAIFGLQ. At 147–195 the chain is on the cytoplasmic side; that stretch reads HIGMQMRIAMFSLIYKKTLKLSSRVLDKISIGQLVSLLSNNLNKFDEGL. A helical transmembrane segment spans residues 196-216; that stretch reads ALAHFVWIAPLQVTLLMGLLW. Topologically, residues 217-222 are extracellular; that stretch reads DLLQAS. Residues 223-243 traverse the membrane as a helical segment; the sequence is AFCGLAVLIVLALFQAWLGKM. Residues 244-298 are Cytoplasmic-facing; it reads MMKYRDQRAGKINERLVITSEMIENIQSVKAYCWEEAMEKMIENLRQTELKLTRK. A helical transmembrane segment spans residues 299–319; sequence AAYMRYFNSAAFFFSGFFVVF. Topologically, residues 320–339 are extracellular; sequence LSVLPYAFLQGIILRKIFTT. A helical transmembrane segment spans residues 340–358; sequence ISFCIVLRMAITRQFPGAV. Residues 359 to 859 are Cytoplasmic-facing; that stretch reads QTWYDSLGAI…YLRYITVHKS (501 aa). Residues Trp-401, Ser-435, 459–466, and Gln-494 contribute to the ATP site; that span reads GSTGAGKT. The ABC transporter 1 domain occupies 424-647; the sequence is NGDNKLFFSN…RPDFSSKLMG (224 aa). The S-palmitoyl cysteine moiety is linked to residue Cys-525. Ser-550 is subject to Phosphoserine. Positions 655–832 are disordered R region; that stretch reads SAERRNSILT…EEINEEDLKE (178 aa). Phosphoserine; by PKA occurs at positions 661 and 671. Ser-687 is modified (phosphoserine; by PKC). Lys-689 participates in a covalent cross-link: Glycyl lysine isopeptide (Lys-Gly) (interchain with G-Cter in ubiquitin). Residues Ser-701 and Ser-713 each carry the phosphoserine; by PKA modification. Thr-718 bears the Phosphothreonine mark. Phosphoserine; by PKA occurs at positions 738, 769, 796, and 814. A helical membrane pass occupies residues 860–880; the sequence is LILVLIWCLIIFLAEVAASLV. An ABC transmembrane type-1 2 domain is found at 860 to 1156; that stretch reads LILVLIWCLI…AVNSSIDVDS (297 aa). The Extracellular portion of the chain corresponds to 881 to 919; that stretch reads VLWLLKNNTPQQEMNSTQSGNRSYPVIITNTSFYYIFYI. 2 N-linked (GlcNAc...) asparagine glycosylation sites follow: Asn-895 and Asn-901. The discontinuously helical transmembrane segment at 920-940 threads the bilayer; it reads YVGVADTLLALGLFRGLPLVH. The Cytoplasmic portion of the chain corresponds to 941 to 991; it reads TLITVSKILHHKMLRSVLQAPMSTLNALKAGGILNRFSKDIAILDDLLPLT. A helical transmembrane segment spans residues 992–1012; it reads IFDFIQLLLIVIGAIAVVSVL. Residues 1013–1014 lie on the Extracellular side of the membrane; that stretch reads QP. Residues 1015-1035 form a helical membrane-spanning segment; the sequence is YIFLATVPVIAAFIMLRAYFL. The Cytoplasmic segment spans residues 1036-1096; the sequence is HTSQQLKQLE…TANWFLYLST (61 aa). A helical membrane pass occupies residues 1097–1117; it reads LRWFQMRIEMIFVIFFIAVTF. Over 1118–1131 the chain is Extracellular; it reads ISILTTGEGQGSVG. A helical transmembrane segment spans residues 1132–1152; the sequence is IILTLAMNIMSTLQWAVNSSI. Residues 1153-1481 are Cytoplasmic-facing; it reads DVDSLMRSVS…TEEEVQETRL (329 aa). The region spanning 1211–1444 is the ABC transporter 2 domain; sequence MIVKDLTAKY…KSLFRQAISS (234 aa). Residues Tyr-1220 and 1245-1252 each bind ATP; that span reads GRTGSGKS. Residues 1387–1481 are interaction with GORASP2; it reads RTIKQAFADC…TEEEVQETRL (95 aa). A lipid anchor (S-palmitoyl cysteine) is attached at Cys-1396. Phosphoserine is present on residues Ser-1445 and Ser-1457. The segment covering 1453 to 1462 has biased composition (basic residues); it reads HRNSSKHKSR. The interval 1453–1481 is disordered; sequence HRNSSKHKSRSQITALKEETEEEVQETRL. Over residues 1471 to 1481 the composition is skewed to acidic residues; that stretch reads ETEEEVQETRL. The PDZ-binding motif lies at 1479-1481; the sequence is TRL.

The protein belongs to the ABC transporter superfamily. ABCC family. CFTR transporter (TC 3.A.1.202) subfamily. In terms of assembly, monomer; does not require oligomerization for channel activity. May form oligomers in the membrane. Interacts with SLC26A3, SLC26A6 and NHERF1. Interacts with SHANK2. Interacts with MYO6. Interacts (via C-terminus) with GOPC (via PDZ domain); this promotes CFTR internalization and thereby decreases channel activity. Interacts with SLC4A7 through NHERF1. Found in a complex with MYO5B and RAB11A. Interacts with ANO1. Interacts with SLC26A8. Interacts with AHCYL1; the interaction increases CFTR activity. Interacts with CSE1L. The core-glycosylated form interacts with GORASP2 (via PDZ GRASP-type 1 domain) in respone to ER stress. Interacts with MARCHF2; the interaction leads to CFTR ubiqtuitination and degradation. Interacts with ADGRG2. Post-translationally, N-glycosylated. In terms of processing, phosphorylated; cAMP treatment promotes phosphorylation and activates the channel. Dephosphorylation decreases the ATPase activity (in vitro). Phosphorylation at PKA sites activates the channel. Phosphorylation at PKC sites enhances the response to phosphorylation by PKA. Phosphorylated by AMPK; this inhibits channel activity. Ubiquitinated, leading to its degradation in the lysosome. Deubiquitination by USP10 in early endosomes enhances its endocytic recycling to the cell membrane. Ubiquitinated by RNF185 during ER stress. Ubiquitinated by MARCHF2.

It is found in the apical cell membrane. It localises to the early endosome membrane. Its subcellular location is the cell membrane. The protein localises to the recycling endosome membrane. The protein resides in the endoplasmic reticulum membrane. It is found in the nucleus. The enzyme catalyses ATP + H2O + closed Cl(-) channel = ADP + phosphate + open Cl(-) channel.. The catalysed reaction is chloride(in) = chloride(out). It carries out the reaction hydrogencarbonate(in) = hydrogencarbonate(out). It catalyses the reaction ATP + H2O = ADP + phosphate + H(+). Epithelial ion channel that plays an important role in the regulation of epithelial ion and water transport and fluid homeostasis. Mediates the transport of chloride ions across the cell membrane. Possesses an intrinsic ATPase activity and utilizes ATP to gate its channel; the passive flow of anions through the channel is gated by cycles of ATP binding and hydrolysis by the ATP-binding domains. The ion channel is also permeable to HCO(3)(-); selectivity depends on the extracellular chloride concentration. Exerts its function also by modulating the activity of other ion channels and transporters. Contributes to the regulation of the pH and the ion content of the epithelial fluid layer. Modulates the activity of the epithelial sodium channel (ENaC) complex, in part by regulating the cell surface expression of the ENaC complex. May regulate bicarbonate secretion and salvage in epithelial cells by regulating the transporter SLC4A7. Can inhibit the chloride channel activity of ANO1. Plays a role in the chloride and bicarbonate homeostasis during sperm epididymal maturation and capacitation. The protein is Cystic fibrosis transmembrane conductance regulator of Cavia porcellus (Guinea pig).